A 155-amino-acid polypeptide reads, in one-letter code: DNA-binding protein inhibitor ID-1 (155 aa).

One can recognise a bHLH domain in the interval Leu-53–Leu-105. The Nuclear export signal motif lies at Val-98–Ser-111.

Heterodimer with other HLH proteins. Interacts with COPS5, IFI204, GATA4 and NKX2-5. Interacts with CLOCK and BMAL1.

It is found in the cytoplasm. The protein resides in the nucleus. Its function is as follows. Transcriptional regulator (lacking a basic DNA binding domain) which negatively regulates the basic helix-loop-helix (bHLH) transcription factors by forming heterodimers and inhibiting their DNA binding and transcriptional activity. Implicated in regulating a variety of cellular processes, including cellular growth, senescence, differentiation, apoptosis, angiogenesis, and neoplastic transformation. Inhibits skeletal muscle and cardiac myocyte differentiation. Regulates the circadian clock by repressing the transcriptional activator activity of the CLOCK-BMAL1 heterodimer. This chain is DNA-binding protein inhibitor ID-1 (ID1), found in Homo sapiens (Human).